The primary structure comprises 133 residues: ATP synthase epsilon chain (133 aa).

Belongs to the ATPase epsilon chain family. In terms of assembly, F-type ATPases have 2 components, CF(1) - the catalytic core - and CF(0) - the membrane proton channel. CF(1) has five subunits: alpha(3), beta(3), gamma(1), delta(1), epsilon(1). CF(0) has three main subunits: a, b and c.

Its subcellular location is the cell membrane. In terms of biological role, produces ATP from ADP in the presence of a proton gradient across the membrane. This chain is ATP synthase epsilon chain, found in Clostridium perfringens (strain ATCC 13124 / DSM 756 / JCM 1290 / NCIMB 6125 / NCTC 8237 / Type A).